A 49-amino-acid chain; its full sequence is Small, acid-soluble spore protein O (49 aa).

Residues 1 to 49 (MGKRKANHTISGMNAASAQGQGAGYNEEFANENLTAAERQNNKKRKKNQ) form a disordered region. The span at 8–20 (HTISGMNAASAQG) shows a compositional bias: polar residues.

The protein belongs to the SspO family.

It is found in the spore core. The sequence is that of Small, acid-soluble spore protein O from Bacillus cereus (strain AH187).